The chain runs to 317 residues: tRNA-dihydrouridine(20a/20b) synthase [NAD(P)+]-like (317 aa).

Residues 33-35 and glutamine 87 each bind FMN; that span reads PMV. Cysteine 116 acts as the Proton donor in catalysis. FMN contacts are provided by residues lysine 158, histidine 186, 216–218, and 240–241; these read NGD and AR.

Belongs to the Dus family. Dus4 subfamily. FMN is required as a cofactor.

It catalyses the reaction 5,6-dihydrouridine(20a) in tRNA + NADP(+) = uridine(20a) in tRNA + NADPH + H(+). It carries out the reaction 5,6-dihydrouridine(20a) in tRNA + NAD(+) = uridine(20a) in tRNA + NADH + H(+). The enzyme catalyses 5,6-dihydrouridine(20b) in tRNA + NAD(+) = uridine(20b) in tRNA + NADH + H(+). The catalysed reaction is 5,6-dihydrouridine(20b) in tRNA + NADP(+) = uridine(20b) in tRNA + NADPH + H(+). Catalyzes the synthesis of dihydrouridine, a modified base found in the D-loop of most tRNAs. The polypeptide is tRNA-dihydrouridine(20a/20b) synthase [NAD(P)+]-like (DUS4L) (Homo sapiens (Human)).